We begin with the raw amino-acid sequence, 212 residues long: ATP phosphoribosyltransferase (212 aa).

The protein belongs to the ATP phosphoribosyltransferase family. Short subfamily. As to quaternary structure, heteromultimer composed of HisG and HisZ subunits.

Its subcellular location is the cytoplasm. It carries out the reaction 1-(5-phospho-beta-D-ribosyl)-ATP + diphosphate = 5-phospho-alpha-D-ribose 1-diphosphate + ATP. It functions in the pathway amino-acid biosynthesis; L-histidine biosynthesis; L-histidine from 5-phospho-alpha-D-ribose 1-diphosphate: step 1/9. Functionally, catalyzes the condensation of ATP and 5-phosphoribose 1-diphosphate to form N'-(5'-phosphoribosyl)-ATP (PR-ATP). Has a crucial role in the pathway because the rate of histidine biosynthesis seems to be controlled primarily by regulation of HisG enzymatic activity. The sequence is that of ATP phosphoribosyltransferase from Prochlorococcus marinus (strain MIT 9515).